The chain runs to 834 residues: Serine-rich coiled-coil domain-containing protein 2 (834 aa).

A disordered region spans residues 169-212 (PKSQLNGFYGNRSAGSMQRPRANSCATRSSSGESLAQSPDSSKS). The segment covering 192 to 212 (SCATRSSSGESLAQSPDSSKS) has biased composition (polar residues). Serine 223 is modified (phosphoserine). Residues 426–443 (RTRITPEEMSLKEEKHEN) are compositionally biased toward basic and acidic residues. Disordered regions lie at residues 426-454 (RTRITPEEMSLKEEKHENGPPQDMFDSPK), 477-509 (CTKHTSGNNLVSPDTDYRAGSSFELSPSDSSDG), 573-628 (NMNR…SPYR), 695-714 (LHDIQLSLPSSPEPEDGDKV), and 780-834 (APSF…RGPQ). Serine 452 bears the Phosphoserine mark. Over residues 497–507 (SSFELSPSDSS) the composition is skewed to low complexity. Basic and acidic residues-rich tracts occupy residues 573–584 (NMNRFDRPDRNV) and 601–611 (GQEHYHLSHPD). Positions 712-749 (DKVYKNEDLLNEIKQLKDEIKKKDEKIQLLELQLATQH) form a coiled coil. 2 stretches are compositionally biased toward polar residues: residues 781–790 (PSFSPWQGSF) and 804–816 (TSSTTAFQQPSQT).

It belongs to the CCSER family.

It is found in the cytoplasm. It localises to the cytoskeleton. Functionally, microtubule-binding protein which might play a role in microtubule bundling. The polypeptide is Serine-rich coiled-coil domain-containing protein 2 (CCSER2) (Homo sapiens (Human)).